The primary structure comprises 410 residues: Exopolygalacturonase (410 aa).

The signal sequence occupies residues 1-22 (MACIDNAMRALFLLALFCVVHG). 2 N-linked (GlcNAc...) asparagine glycosylation sites follow: Asn-89 and Asn-201. PbH1 repeat units lie at residues 192–218 (CKDMLIKDVNVTAPGDSPNTDGIHMGD), 219–240 (SSGVTITNTVIGVGDDCISIGP), 242–262 (TSKVNITGVTCGPGHGISIGS), 272–293 (VTDINVKDCTLKKTANGVRIKA), and 337–377 (ASKV…TMDD). Residue Asp-233 is the Proton donor of the active site. The cysteines at positions 235 and 252 are disulfide-linked. Asn-246 carries N-linked (GlcNAc...) asparagine glycosylation. His-256 is a catalytic residue. A glycan (N-linked (GlcNAc...) asparagine) is linked at Asn-349. A disulfide bridge connects residues Cys-364 and Cys-370. The N-linked (GlcNAc...) asparagine glycan is linked to Asn-387. Cysteines 393 and 409 form a disulfide.

This sequence belongs to the glycosyl hydrolase 28 family. As to expression, pollen.

Its subcellular location is the secreted. The protein localises to the cell wall. The catalysed reaction is [(1-&gt;4)-alpha-D-galacturonosyl](n) + H2O = alpha-D-galacturonate + [(1-&gt;4)-alpha-D-galacturonosyl](n-1). Functionally, may function in depolymerizing pectin during pollen development, germination, and tube growth. Acts as an exo-polygalacturonase. This is Exopolygalacturonase (PG2C) from Zea mays (Maize).